Reading from the N-terminus, the 162-residue chain is Allophycocyanin subunit beta (162 aa).

Residue N72 is modified to N4-methylasparagine. C82 lines the (2R,3E)-phycocyanobilin pocket.

Belongs to the phycobiliprotein family. In terms of assembly, heterohexamer of two alpha chains, one alpha-B chain and three beta chains. Contains one covalently linked phycocyanobilin chromophore. The chromophore is added by phycocyanobilin lyase CpcS 1.

Its subcellular location is the cellular thylakoid membrane. Light-harvesting photosynthetic bile pigment-protein from the phycobiliprotein complex. Allophycocyanin has a maximum absorption at approximately 650 to 653 nanometers. This is Allophycocyanin subunit beta (apcB) from Nostoc sp. (strain PCC 7120 / SAG 25.82 / UTEX 2576).